Here is a 486-residue protein sequence, read N- to C-terminus: ATP synthase subunit beta, chloroplastic (486 aa).

Position 154–161 (154–161 (GGAGVGKT)) interacts with ATP.

The protein belongs to the ATPase alpha/beta chains family. As to quaternary structure, F-type ATPases have 2 components, CF(1) - the catalytic core - and CF(0) - the membrane proton channel. CF(1) has five subunits: alpha(3), beta(3), gamma(1), delta(1), epsilon(1). CF(0) has four main subunits: a(1), b(1), b'(1) and c(9-12).

The protein resides in the plastid. The protein localises to the chloroplast thylakoid membrane. It carries out the reaction ATP + H2O + 4 H(+)(in) = ADP + phosphate + 5 H(+)(out). In terms of biological role, produces ATP from ADP in the presence of a proton gradient across the membrane. The catalytic sites are hosted primarily by the beta subunits. The protein is ATP synthase subunit beta, chloroplastic of Dennstaedtia punctilobula (Hay-scented fern).